Reading from the N-terminus, the 346-residue chain is N-acetyl-gamma-glutamyl-phosphate reductase (346 aa).

Residue cysteine 150 is part of the active site.

It belongs to the NAGSA dehydrogenase family. Type 1 subfamily.

The protein localises to the cytoplasm. The catalysed reaction is N-acetyl-L-glutamate 5-semialdehyde + phosphate + NADP(+) = N-acetyl-L-glutamyl 5-phosphate + NADPH + H(+). The protein operates within amino-acid biosynthesis; L-arginine biosynthesis; N(2)-acetyl-L-ornithine from L-glutamate: step 3/4. Functionally, catalyzes the NADPH-dependent reduction of N-acetyl-5-glutamyl phosphate to yield N-acetyl-L-glutamate 5-semialdehyde. In Moorella thermoacetica (strain ATCC 39073 / JCM 9320), this protein is N-acetyl-gamma-glutamyl-phosphate reductase.